The following is a 284-amino-acid chain: HTH-type transcriptional activator RhaR (284 aa).

Positions 181–279 constitute an HTH araC/xylS-type domain; the sequence is DMLMNALRAS…GVSPSAYRQR (99 aa). DNA-binding regions (H-T-H motif) lie at residues 198–219 and 246–269; these read EAFCEQHHFSARSLRSRFKEQT and IGDVAALCGFEDSNYFSVVFHQAF.

In terms of assembly, binds DNA as a dimer.

Its subcellular location is the cytoplasm. Functionally, activates expression of the rhaSR operon in response to L-rhamnose. The chain is HTH-type transcriptional activator RhaR from Pectobacterium atrosepticum (strain SCRI 1043 / ATCC BAA-672) (Erwinia carotovora subsp. atroseptica).